Here is a 113-residue protein sequence, read N- to C-terminus: Large ribosomal subunit protein uL24 (113 aa).

The protein belongs to the universal ribosomal protein uL24 family. In terms of assembly, part of the 50S ribosomal subunit.

Functionally, one of two assembly initiator proteins, it binds directly to the 5'-end of the 23S rRNA, where it nucleates assembly of the 50S subunit. One of the proteins that surrounds the polypeptide exit tunnel on the outside of the subunit. The chain is Large ribosomal subunit protein uL24 from Synechococcus elongatus (strain ATCC 33912 / PCC 7942 / FACHB-805) (Anacystis nidulans R2).